A 329-amino-acid polypeptide reads, in one-letter code: Tagatose 1,6-diphosphate aldolase 2 (329 aa).

It belongs to the aldolase LacD family.

It carries out the reaction D-tagatofuranose 1,6-bisphosphate = D-glyceraldehyde 3-phosphate + dihydroxyacetone phosphate. It participates in carbohydrate metabolism; D-tagatose 6-phosphate degradation; D-glyceraldehyde 3-phosphate and glycerone phosphate from D-tagatose 6-phosphate: step 2/2. This chain is Tagatose 1,6-diphosphate aldolase 2 (lacD2), found in Streptococcus mutans serotype c (strain ATCC 700610 / UA159).